The following is a 137-amino-acid chain: ER-derived vesicles protein erv14 (137 aa).

Residues Met-1–Tyr-9 are Cytoplasmic-facing. Residues Ile-10–Phe-30 form a helical membrane-spanning segment. Residues Ser-31–Thr-62 are Extracellular-facing. A helical transmembrane segment spans residues Leu-63–Phe-83. Over His-84–Lys-114 the chain is Cytoplasmic. The helical transmembrane segment at Val-115–Gln-135 threads the bilayer. At Glu-136–Glu-137 the chain is on the extracellular side.

Belongs to the cornichon family.

The protein resides in the endoplasmic reticulum. It localises to the membrane. The protein localises to the golgi apparatus membrane. Regulates export of the secretory proteins from the endoplasmic reticulum in COPII-coated vesicles. The chain is ER-derived vesicles protein erv14 (erv14) from Schizosaccharomyces pombe (strain 972 / ATCC 24843) (Fission yeast).